The sequence spans 289 residues: 4-hydroxybenzoate octaprenyltransferase (289 aa).

8 helical membrane-spanning segments follow: residues 23-43, 46-66, 99-119, 141-161, 163-183, 213-233, 234-254, and 268-288; these read IGAL…TPGV, LWIL…GCVV, LFVV…TMTI, LPQV…FAAV, ESVP…AVAY, LIIG…GWLN, GLGW…VYQQ, and AFMN…MSYV.

This sequence belongs to the UbiA prenyltransferase family. Mg(2+) is required as a cofactor.

It is found in the cell inner membrane. The enzyme catalyses all-trans-octaprenyl diphosphate + 4-hydroxybenzoate = 4-hydroxy-3-(all-trans-octaprenyl)benzoate + diphosphate. It participates in cofactor biosynthesis; ubiquinone biosynthesis. Catalyzes the prenylation of para-hydroxybenzoate (PHB) with an all-trans polyprenyl group. Mediates the second step in the final reaction sequence of ubiquinone-8 (UQ-8) biosynthesis, which is the condensation of the polyisoprenoid side chain with PHB, generating the first membrane-bound Q intermediate 3-octaprenyl-4-hydroxybenzoate. In Citrobacter koseri (strain ATCC BAA-895 / CDC 4225-83 / SGSC4696), this protein is 4-hydroxybenzoate octaprenyltransferase.